Consider the following 214-residue polypeptide: Alpha-S1-casein (214 aa).

Positions 1–15 (MKLLILTCLVAVALA) are cleaved as a signal peptide. Phosphoserine occurs at positions 63, 79, 81, 82, 83, and 90. 2 consecutive repeats follow at residues 85 to 99 (EIVP…IQKE) and 125 to 140 (EIVP…SMKE).

The protein belongs to the alpha-casein family. In terms of tissue distribution, mammary gland specific. Secreted in milk.

It is found in the secreted. Important role in the capacity of milk to transport calcium phosphate. The chain is Alpha-S1-casein (CSN1S1) from Bubalus bubalis (Domestic water buffalo).